Here is a 114-residue protein sequence, read N- to C-terminus: MVRIKRGNIARKRHKKILKLAKGFRGSHSKLFRIANQQVMKALRYGYHGRKRRKREFRSLWITRINAAVRIEGTNYSCFINSLKRQHIALNRKMLAQLAVSDQNAFKQLTKITH.

This sequence belongs to the bacterial ribosomal protein bL20 family.

Its subcellular location is the plastid. It localises to the chloroplast. In terms of biological role, binds directly to 23S ribosomal RNA and is necessary for the in vitro assembly process of the 50S ribosomal subunit. It is not involved in the protein synthesizing functions of that subunit. This is Large ribosomal subunit protein bL20c (rpl20) from Guillardia theta (Cryptophyte).